The following is a 118-amino-acid chain: MARIAGINIPDHKHAVIALTAIYGVGDTRAKSICAAAGIAEDVKVKDLDEAQIEALRTEVGKFTVEGDLRREVSMNIKRLMDLGCYRGLRHRRGLPVRGQRTKTNARTRKGPRKPIKK.

The segment at 94 to 118 (GLPVRGQRTKTNARTRKGPRKPIKK) is disordered.

It belongs to the universal ribosomal protein uS13 family. Part of the 30S ribosomal subunit. Forms a loose heterodimer with protein S19. Forms two bridges to the 50S subunit in the 70S ribosome.

Its function is as follows. Located at the top of the head of the 30S subunit, it contacts several helices of the 16S rRNA. In the 70S ribosome it contacts the 23S rRNA (bridge B1a) and protein L5 of the 50S subunit (bridge B1b), connecting the 2 subunits; these bridges are implicated in subunit movement. Contacts the tRNAs in the A and P-sites. The chain is Small ribosomal subunit protein uS13 from Tolumonas auensis (strain DSM 9187 / NBRC 110442 / TA 4).